A 338-amino-acid polypeptide reads, in one-letter code: Holliday junction branch migration complex subunit RuvB (338 aa).

The segment at 1 to 180 (MTRLVTPDIT…FGVISRLEFY (180 aa)) is large ATPase domain (RuvB-L). ATP contacts are provided by residues L19, R20, G61, K64, T65, T66, 127–129 (EDY), R170, Y180, and R217. T65 contributes to the Mg(2+) binding site. The tract at residues 181–251 (TDDELTTIVT…VVDESLKLLE (71 aa)) is small ATPAse domain (RuvB-S). The interval 254 to 338 (EKGFDHMDRT…PPSSSQGNLF (85 aa)) is head domain (RuvB-H). The DNA site is built by R290, R309, and R314.

This sequence belongs to the RuvB family. In terms of assembly, homohexamer. Forms an RuvA(8)-RuvB(12)-Holliday junction (HJ) complex. HJ DNA is sandwiched between 2 RuvA tetramers; dsDNA enters through RuvA and exits via RuvB. An RuvB hexamer assembles on each DNA strand where it exits the tetramer. Each RuvB hexamer is contacted by two RuvA subunits (via domain III) on 2 adjacent RuvB subunits; this complex drives branch migration. In the full resolvosome a probable DNA-RuvA(4)-RuvB(12)-RuvC(2) complex forms which resolves the HJ.

Its subcellular location is the cytoplasm. It catalyses the reaction ATP + H2O = ADP + phosphate + H(+). In terms of biological role, the RuvA-RuvB-RuvC complex processes Holliday junction (HJ) DNA during genetic recombination and DNA repair, while the RuvA-RuvB complex plays an important role in the rescue of blocked DNA replication forks via replication fork reversal (RFR). RuvA specifically binds to HJ cruciform DNA, conferring on it an open structure. The RuvB hexamer acts as an ATP-dependent pump, pulling dsDNA into and through the RuvAB complex. RuvB forms 2 homohexamers on either side of HJ DNA bound by 1 or 2 RuvA tetramers; 4 subunits per hexamer contact DNA at a time. Coordinated motions by a converter formed by DNA-disengaged RuvB subunits stimulates ATP hydrolysis and nucleotide exchange. Immobilization of the converter enables RuvB to convert the ATP-contained energy into a lever motion, pulling 2 nucleotides of DNA out of the RuvA tetramer per ATP hydrolyzed, thus driving DNA branch migration. The RuvB motors rotate together with the DNA substrate, which together with the progressing nucleotide cycle form the mechanistic basis for DNA recombination by continuous HJ branch migration. Branch migration allows RuvC to scan DNA until it finds its consensus sequence, where it cleaves and resolves cruciform DNA. The chain is Holliday junction branch migration complex subunit RuvB from Geobacter metallireducens (strain ATCC 53774 / DSM 7210 / GS-15).